We begin with the raw amino-acid sequence, 426 residues long: Glutamate-1-semialdehyde 2,1-aminomutase (426 aa).

An N6-(pyridoxal phosphate)lysine modification is found at lysine 265.

The protein belongs to the class-III pyridoxal-phosphate-dependent aminotransferase family. HemL subfamily. Homodimer. Pyridoxal 5'-phosphate is required as a cofactor.

It localises to the cytoplasm. It catalyses the reaction (S)-4-amino-5-oxopentanoate = 5-aminolevulinate. The protein operates within porphyrin-containing compound metabolism; protoporphyrin-IX biosynthesis; 5-aminolevulinate from L-glutamyl-tRNA(Glu): step 2/2. The chain is Glutamate-1-semialdehyde 2,1-aminomutase from Escherichia coli O9:H4 (strain HS).